The sequence spans 366 residues: tRNA/tmRNA (uracil-C(5))-methyltransferase (366 aa).

Residues Q189, Y217, N222, E238, and D298 each contribute to the S-adenosyl-L-methionine site. The active-site Nucleophile is the C323. E357 serves as the catalytic Proton acceptor.

It belongs to the class I-like SAM-binding methyltransferase superfamily. RNA M5U methyltransferase family. TrmA subfamily.

The enzyme catalyses uridine(54) in tRNA + S-adenosyl-L-methionine = 5-methyluridine(54) in tRNA + S-adenosyl-L-homocysteine + H(+). The catalysed reaction is uridine(341) in tmRNA + S-adenosyl-L-methionine = 5-methyluridine(341) in tmRNA + S-adenosyl-L-homocysteine + H(+). Its function is as follows. Dual-specificity methyltransferase that catalyzes the formation of 5-methyluridine at position 54 (m5U54) in all tRNAs, and that of position 341 (m5U341) in tmRNA (transfer-mRNA). This chain is tRNA/tmRNA (uracil-C(5))-methyltransferase, found in Idiomarina loihiensis (strain ATCC BAA-735 / DSM 15497 / L2-TR).